Consider the following 492-residue polypeptide: MNKSSTKTLIALSMMAVSSGVSAHGYVSETNDGIAGSRAALCKFPTSDTQEKNRDCGAVQWEPQSVEGPEGFPEKGPADGQIAGAGLVQFSELNEQTADRWVKRPITAGAQTFEWTFTANHVTRTWKYYMTKQNWNPNAVLTRDSFDLTPFCELEYNMEKPPLYPNTFSHECIVPEREGYQVILAVWDVGDTAAAFYNVIDVKFDGNGGVVDPTWSQGGQINPTRDLNVGDRVFTRVFDTSGENASLSTELVIENETQGQANNWTHALATKINKEQQNIGAGQLNDKGEFSPQYGSNPVYLKAGSGLKSVEIGYQLETVEPVYHLDIEGLASEYTIGDSATELDLSLYATGDMNVELTVYNHGKEALANTNVTLKDGEAKSVVMALSKSEKGHHMLVSRIKNMDGELIKQDMSDFHLVEEAVTPPPSGDFDFVFPEGVKGYKAGTKVLAEDGNVYQCKEFPYSGYCVQWTETATNFAPGVGSDWSMAWDKVN.

The first 23 residues, 1–23 (MNKSSTKTLIALSMMAVSSGVSA), serve as a signal peptide directing secretion. A Chitin-binding type-4 domain is found at 24-204 (HGYVSETNDG…AFYNVIDVKF (181 aa)). Positions 443 to 484 (AGTKVLAEDGNVYQCKEFPYSGYCVQWTETATNFAPGVGSDW) constitute a Chitin-binding type-3 domain.

The protein belongs to the GbpA family.

The protein resides in the secreted. Probably interacts with GlcNAc residues. May promote attachment to both epithelial cell surfaces and chitin. The chain is GlcNAc-binding protein A from Aliivibrio fischeri (strain ATCC 700601 / ES114) (Vibrio fischeri).